The sequence spans 321 residues: MSKPIQMEKGVKYRDADKMALIPVKNMPTEQKEVLRKPEWMKIKLPASSKRIDDIKSAMRKNNLHSVCEEASCPNLAECFNHGTATFMILGAICTRRCPFCDVAHGRPVAPEAEEPKKLAKTIQDMKLKYVVITSVDRDDLRDGGAQHFADCNREIRALNPEIRIETLVPDFRGRMDRALEAMIDNPPDVFNHNLETAPRLYRKVRPGANYQWSLDLLKKFKDQHPNVPTKSGLMMGLGETKEEIVEVLKDLRAHGVTMLTLGQYLAPSRHHLPVERYVPPAEFDELKEIALELGFTHAACGPFVRSSYHADLQAKGEEVK.

Residues cysteine 68, cysteine 73, cysteine 79, cysteine 94, cysteine 98, cysteine 101, and serine 308 each coordinate [4Fe-4S] cluster. Positions phenylalanine 80–threonine 297 constitute a Radical SAM core domain.

This sequence belongs to the radical SAM superfamily. Lipoyl synthase family. [4Fe-4S] cluster is required as a cofactor.

Its subcellular location is the cytoplasm. It catalyses the reaction [[Fe-S] cluster scaffold protein carrying a second [4Fe-4S](2+) cluster] + N(6)-octanoyl-L-lysyl-[protein] + 2 oxidized [2Fe-2S]-[ferredoxin] + 2 S-adenosyl-L-methionine + 4 H(+) = [[Fe-S] cluster scaffold protein] + N(6)-[(R)-dihydrolipoyl]-L-lysyl-[protein] + 4 Fe(3+) + 2 hydrogen sulfide + 2 5'-deoxyadenosine + 2 L-methionine + 2 reduced [2Fe-2S]-[ferredoxin]. It participates in protein modification; protein lipoylation via endogenous pathway; protein N(6)-(lipoyl)lysine from octanoyl-[acyl-carrier-protein]: step 2/2. In terms of biological role, catalyzes the radical-mediated insertion of two sulfur atoms into the C-6 and C-8 positions of the octanoyl moiety bound to the lipoyl domains of lipoate-dependent enzymes, thereby converting the octanoylated domains into lipoylated derivatives. This chain is Lipoyl synthase, found in Aliivibrio fischeri (strain MJ11) (Vibrio fischeri).